We begin with the raw amino-acid sequence, 1583 residues long: Pentafunctional AROM polypeptide (1583 aa).

The 3-dehydroquinate synthase stretch occupies residues 1–384 (MSNPTKISIL…YETRASVVAN (384 aa)). NAD(+) contacts are provided by residues 44–46 (DTN), 81–84 (EVSK), 114–116 (GGV), and D119. Position 130 (R130) interacts with 7-phospho-2-dehydro-3-deoxy-D-arabino-heptonate. 139-140 (TT) serves as a coordination point for NAD(+). Residues D146 and K152 each coordinate 7-phospho-2-dehydro-3-deoxy-D-arabino-heptonate. K161 is an NAD(+) binding site. Position 162 (N162) interacts with 7-phospho-2-dehydro-3-deoxy-D-arabino-heptonate. Residues 179–182 (FLET) and N190 each bind NAD(+). Zn(2+) is bound at residue E194. 7-phospho-2-dehydro-3-deoxy-D-arabino-heptonate is bound by residues 194 to 197 (EVIK) and K250. Residue E260 is the Proton acceptor; for 3-dehydroquinate synthase activity of the active site. 7-phospho-2-dehydro-3-deoxy-D-arabino-heptonate is bound by residues 264 to 268 (RNLLN) and H271. H271 contacts Zn(2+). Catalysis depends on H275, which acts as the Proton acceptor; for 3-dehydroquinate synthase activity. Residues H287 and K356 each coordinate 7-phospho-2-dehydro-3-deoxy-D-arabino-heptonate. A Zn(2+)-binding site is contributed by H287. The interval 397-842 (VHPGVAQSSN…WDTLRQLFKV (446 aa)) is EPSP synthase. C824 functions as the For EPSP synthase activity in the catalytic mechanism. Residues 863–1055 (NASIYIIGMR…KEKEHSFFAS (193 aa)) form a shikimate kinase region. 870–877 (GMRGAGKS) provides a ligand contact to ATP. Residues 1056–1276 (LTLPDLREAG…AAPGQLSATE (221 aa)) are 3-dehydroquinase. H1179 functions as the Proton acceptor; for 3-dehydroquinate dehydratase activity in the catalytic mechanism. Residue K1207 is the Schiff-base intermediate with substrate; for 3-dehydroquinate dehydratase activity of the active site. A shikimate dehydrogenase region spans residues 1289 to 1583 (PKKFAIFGSP…SARACSSPLI (295 aa)).

It in the N-terminal section; belongs to the sugar phosphate cyclases superfamily. Dehydroquinate synthase family. In the 2nd section; belongs to the EPSP synthase family. The protein in the 3rd section; belongs to the shikimate kinase family. This sequence in the 4th section; belongs to the type-I 3-dehydroquinase family. It in the C-terminal section; belongs to the shikimate dehydrogenase family. As to quaternary structure, homodimer. Zn(2+) is required as a cofactor.

The protein localises to the cytoplasm. It carries out the reaction 7-phospho-2-dehydro-3-deoxy-D-arabino-heptonate = 3-dehydroquinate + phosphate. The catalysed reaction is 3-dehydroquinate = 3-dehydroshikimate + H2O. It catalyses the reaction shikimate + NADP(+) = 3-dehydroshikimate + NADPH + H(+). The enzyme catalyses shikimate + ATP = 3-phosphoshikimate + ADP + H(+). It carries out the reaction 3-phosphoshikimate + phosphoenolpyruvate = 5-O-(1-carboxyvinyl)-3-phosphoshikimate + phosphate. It functions in the pathway metabolic intermediate biosynthesis; chorismate biosynthesis; chorismate from D-erythrose 4-phosphate and phosphoenolpyruvate: step 2/7. Its pathway is metabolic intermediate biosynthesis; chorismate biosynthesis; chorismate from D-erythrose 4-phosphate and phosphoenolpyruvate: step 3/7. The protein operates within metabolic intermediate biosynthesis; chorismate biosynthesis; chorismate from D-erythrose 4-phosphate and phosphoenolpyruvate: step 4/7. It participates in metabolic intermediate biosynthesis; chorismate biosynthesis; chorismate from D-erythrose 4-phosphate and phosphoenolpyruvate: step 5/7. It functions in the pathway metabolic intermediate biosynthesis; chorismate biosynthesis; chorismate from D-erythrose 4-phosphate and phosphoenolpyruvate: step 6/7. The AROM polypeptide catalyzes 5 consecutive enzymatic reactions in prechorismate polyaromatic amino acid biosynthesis. The sequence is that of Pentafunctional AROM polypeptide (aromA) from Emericella nidulans (strain FGSC A4 / ATCC 38163 / CBS 112.46 / NRRL 194 / M139) (Aspergillus nidulans).